The following is a 456-amino-acid chain: Ribonuclease inhibitor (456 aa).

Met-1 carries the N-acetylmethionine modification. 15 LRR repeats span residues 15–43 (WTELLPLLQQYEVVRLDDCGLTEEHCKDI), 44–71 (GSALRANPSLTELCLRTNELGDAGVHLV), 72–100 (LQGLQSPTCKIQKLSLQNCSLTEAGCGVL), 101–128 (PSTLRSLPTLRELHLSDNPLGDAGLRLL), 129–157 (CEGLLDPQCHLEKLQLEYCRLTAASCEPL), 158–185 (ASVLRATRALKELTVSNNDIGEAGARVL), 186–214 (GQGLADSACQLETLRLENCGLTPANCKDL), 215–242 (CGIVASQASLRELDLGSNGLGDAGIAEL), 243–271 (CPGLLSPASRLKTLWLWECDITASGCRDL), 272–299 (CRVLQAKETLKELSLAGNKLGDEGARLL), 300–328 (CESLLQPGCQLESLWVKSCSLTAACCQHV), 329–356 (SLMLTQNKHLLELQLSSNKLGDSGIQEL), 357–385 (CQALSQPGTTLRVLCLGDCEVTNSGCSSL), 386–413 (ASLLLANRSLRELDLSNNCVGDPGVLQL), and 414–442 (LGSLEQPGCALEQLVLYDTYWTEEVEDRL). Ser-86 bears the Phosphoserine mark.

Forms high-affinity heterodimers with RNASE1, ANG and RNASE2.

The protein localises to the cytoplasm. It localises to the nucleus. Ribonuclease inhibitor which inhibits RNASE1, RNASE2 and angiogenin (ANG). May play a role in redox homeostasis. Required to inhibit the cytotoxic tRNA ribonuclease activity of ANG in the cytoplasm in absence of stress. Relocates to the nucleus in response to stress, relieving inhibition of ANG in the cytoplasm, and inhibiting the angiogenic activity of ANG in the nucleus. The polypeptide is Ribonuclease inhibitor (RNH1) (Sus scrofa (Pig)).